The following is an 89-amino-acid chain: Repressor protein (89 aa).

The segment at residues 29–52 (SGDIARNTGYSRRRISDRCTVLVD) is a DNA-binding region (H-T-H motif).

Transcriptional repressor expressed under lysogenic conditions, which specifically binds the host DNA site 'RRGAAG'. The binding occurs cooperatively, probably as 2 copies of a dimer. Possibly prevents RNA polymerase access to the promoters for lytic cell cycle transcription. In Halobacterium salinarum (Halobacterium halobium), this protein is Repressor protein (T6).